The sequence spans 620 residues: MSPPSPGRRREQRRPRAAATMATPLPGRAGGPATPLSPTRLSRLQEKEELRELNDRLAHYIDRVRALELENDRLLLKISEKEEVTTREVSGIKALYESELADARRVLDETARERARLQIEIGKLRAELDEVNKSAKKREGELTVAQGRVKDLESLFHRSEVELAAALSDKRGLESDVAELRAQLAKAEDGHAVAKKQLEKETLMRVDLENRCQSLQEELDFRKSVFEEEVRETRRRHERRLVEVDSSRQQEYDFKMAQALEELRSQHDEQVRLYKLELEQTYQAKLDSAKLSSDQNDKAASAAREELKEARMRLESLSYQLSGLQKQASAAEDRIRELEEAMAGERDKFRKMLDAKEQEMTEMRDVMQQQLAEYQELLDVKLALDMEINAYRKLLEGEEERLKLSPSPSSRVTVSRATSSSSGSLSATGRLGRSKRKRLEVEEPLGSGPSVLGTGTGGSGGFHLAQQASASGSVSIEEIDLEGKFVQLKNNSDKDQSLGNWRIKRQVLEGEEIAYKFTPKYILRAGQMVTVWAAGAGVAHSPPSTLVWKGQSSWGTGESFRTVLVNADGEEVAMRTVKKSSVMRENENGEEEEEEAEFGEEDLFHQQGDPRTTSRGCYVM.

Residues 1-38 (MSPPSPGRRREQRRPRAAATMATPLPGRAGGPATPLSP) form a disordered region. The segment at 1 to 48 (MSPPSPGRRREQRRPRAAATMATPLPGRAGGPATPLSPTRLSRLQEKE) is head. 2 positions are modified to phosphothreonine: Thr-23 and Thr-34. Phosphoserine is present on Ser-37. The 357-residue stretch at 46–402 (EKEELRELND…KLLEGEEERL (357 aa)) folds into the IF rod domain. The coil 1A stretch occupies residues 49 to 83 (ELRELNDRLAHYIDRVRALELENDRLLLKISEKEE). Lys-77 participates in a covalent cross-link: Glycyl lysine isopeptide (Lys-Gly) (interchain with G-Cter in SUMO2). Lys-81 is subject to N6-acetyllysine; alternate. Lys-81 participates in a covalent cross-link: Glycyl lysine isopeptide (Lys-Gly) (interchain with G-Cter in SUMO2); alternate. Residues 84-95 (VTTREVSGIKAL) are linker 1. Positions 96-229 (YESELADARR…DFRKSVFEEE (134 aa)) are coil 1B. Glycyl lysine isopeptide (Lys-Gly) (interchain with G-Cter in SUMO2) cross-links involve residues Lys-195 and Lys-255. The tract at residues 230–256 (VRETRRRHERRLVEVDSSRQQEYDFKM) is linker 2. A coil 2 region spans residues 257-400 (AQALEELRSQ…YRKLLEGEEE (144 aa)). Residues Ser-316 and Ser-407 each carry the phosphoserine modification. Positions 399-464 (EERLKLSPSP…GTGGSGGFHL (66 aa)) are disordered. The tail stretch occupies residues 401–620 (RLKLSPSPSS…RTTSRGCYVM (220 aa)). Over residues 404 to 431 (LSPSPSSRVTVSRATSSSSGSLSATGRL) the composition is skewed to low complexity. O-linked (GlcNAc) threonine glycosylation is present at Thr-413. Phosphoserine is present on residues Ser-420, Ser-422, Ser-424, and Ser-426. Arg-433 bears the Omega-N-methylarginine mark. The short motif at 435–440 (KRKRLE) is the Nuclear localization signal element. Over residues 444-453 (PLGSGPSVLG) the composition is skewed to low complexity. In terms of domain architecture, LTD spans 462 to 579 (FHLAQQASAS…EEVAMRTVKK (118 aa)). Lys-489 participates in a covalent cross-link: Glycyl lysine isopeptide (Lys-Gly) (interchain with G-Cter in SUMO2). A Phosphoserine modification is found at Ser-497. The segment at 581–620 (SVMRENENGEEEEEEAEFGEEDLFHQQGDPRTTSRGCYVM) is disordered. Positions 588 to 601 (NGEEEEEEAEFGEE) are enriched in acidic residues. Residues 609 to 620 (DPRTTSRGCYVM) show a composition bias toward polar residues. Cys-617 is subject to Cysteine methyl ester. Residue Cys-617 is the site of S-farnesyl cysteine attachment. Positions 618–620 (YVM) are cleaved as a propeptide — removed in mature form.

The protein belongs to the intermediate filament family. As to quaternary structure, dimer. Lamin dimers then assemble into dimeric head-to-tail polymers. Ultimately, two head-to-tail polymers assemble laterally into a protofilament with a uniformly shaped rod of 3.5 nm in diameter. Interacts with TMEM43. B-type lamins undergo a series of modifications, such as farnesylation and phosphorylation. Increased phosphorylation of the lamins occurs before envelope disintegration and probably plays a role in regulating lamin associations. Post-translationally, phosphorylation plays a key role in lamin organization, subcellular localization and nuclear envelope disintegration. Phosphorylation by CDK1 at Ser-37 and Ser-407 at the onset of mitosis drives lamin disassembly and nuclear envelope breakdown.

The protein resides in the nucleus lamina. In terms of biological role, lamins are intermediate filament proteins that assemble into a filamentous meshwork, and which constitute the major components of the nuclear lamina, a fibrous layer on the nucleoplasmic side of the inner nuclear membrane. Lamins provide a framework for the nuclear envelope, bridging the nuclear envelope and chromatin, thereby playing an important role in nuclear assembly, chromatin organization, nuclear membrane and telomere dynamics. The structural integrity of the lamina is strictly controlled by the cell cycle, as seen by the disintegration and formation of the nuclear envelope in prophase and telophase, respectively. This is Lamin-B2 (LMNB2) from Homo sapiens (Human).